The sequence spans 393 residues: Protein TsgA (393 aa).

The next 12 membrane-spanning stretches (helical) occupy residues 11–31, 51–71, 78–98, 101–121, 134–154, 162–182, 206–226, 245–265, 273–293, 297–317, 332–352, and 361–381; these read WISF…GMVM, FLNA…EIVP, FGFL…SLAL, AAMF…TFLI, LLFT…IAAF, WYWV…LTFG, IGVL…LGFI, TLVS…SFIL, ILTV…TGTP, AWSI…IITL, FVLT…GPIV, and LLTA…LGFV.

Belongs to the major facilitator superfamily. TsgA family.

The protein resides in the cell inner membrane. In Escherichia coli O7:K1 (strain IAI39 / ExPEC), this protein is Protein TsgA.